The following is a 71-amino-acid chain: Translation initiation factor IF-1 (71 aa).

Positions 1–71 (MAKDAIKLRA…TKGRITYRHK (71 aa)) constitute an S1-like domain.

Belongs to the IF-1 family. As to quaternary structure, component of the 30S ribosomal translation pre-initiation complex which assembles on the 30S ribosome in the order IF-2 and IF-3, IF-1 and N-formylmethionyl-tRNA(fMet); mRNA recruitment can occur at any time during PIC assembly.

The protein localises to the cytoplasm. Its function is as follows. One of the essential components for the initiation of protein synthesis. Stabilizes the binding of IF-2 and IF-3 on the 30S subunit to which N-formylmethionyl-tRNA(fMet) subsequently binds. Helps modulate mRNA selection, yielding the 30S pre-initiation complex (PIC). Upon addition of the 50S ribosomal subunit IF-1, IF-2 and IF-3 are released leaving the mature 70S translation initiation complex. The chain is Translation initiation factor IF-1 from Mycoplasmopsis synoviae (strain 53) (Mycoplasma synoviae).